Consider the following 459-residue polypeptide: Septin-4 (459 aa).

4 positions are modified to phosphoserine: S10, S49, S98, and S99. Disordered stretches follow at residues 18–52 (FVKDFPGSEPCHPTESKTRVARPQILEPRPQSPDL) and 70–98 (SQQYFCPPAPLSPSSRPRSPWGKLDPYDS). The 274-residue stretch at 122 to 395 (KGFDFTLMVA…ENYRAQCIQS (274 aa)) folds into the Septin-type G domain. The tract at residues 132-139 (GESGLGKS) is G1 motif. GTP contacts are provided by residues 132-139 (GESGLGKS) and T166. Residues 189-192 (DTPG) are G3 motif. Positions 270-273 (AKAD) are G4 motif. 271–279 (KADTLTPSE) is a binding site for GTP. S306 carries the phosphoserine modification. G329 and R344 together coordinate GTP. Positions 410-430 (TRESGTDFPIPAVPPGTDPET) are disordered. Position 413 is a phosphoserine (S413). T415 bears the Phosphothreonine mark. Positions 434 to 459 (IREKDEELRRMQEMLHKIQRQMKETH) form a coiled coil.

This sequence belongs to the TRAFAC class TrmE-Era-EngA-EngB-Septin-like GTPase superfamily. Septin GTPase family. As to quaternary structure, septins polymerize into heterooligomeric protein complexes that form filaments, and can associate with cellular membranes, actin filaments and microtubules. GTPase activity is required for filament formation. Interacts with SEPTIN8. Component of a septin core octameric complex consisting of SEPTIN12, SEPTIN7, SEPTIN6 and SEPTIN2 or SEPTIN4 in the order 12-7-6-2-2-6-7-12 or 12-7-6-4-4-6-7-12. Interacts with SEPTIN14 (via C-terminus). Interacts with DYRK1A. Interacts with SLC6A3/DAT and SNCA/alpha-synuclein. Interacts with STX1A; in the striatum. Interacts with XIAP (via BIR3 domain) following the induction of apoptosis. Interacts with AREL1 (via HECT domain); in the cytoplasm following induction of apoptosis. Post-translationally, phosphorylated by DYRK1A.

The protein resides in the cytoplasm. It is found in the cell projection. The protein localises to the cilium. It localises to the flagellum. Its subcellular location is the cytoplasmic vesicle. The protein resides in the secretory vesicle. It is found in the axon. The protein localises to the dendrite. It localises to the perikaryon. Filament-forming cytoskeletal GTPase. Pro-apoptotic protein involved in LGR5-positive intestinal stem cell and Paneth cell expansion in the intestines, via its interaction with XIAP. May also play a role in the regulation of cell fate in the intestine. Positive regulator of apoptosis involved in hematopoietic stem cell homeostasis; via its interaction with XIAP. Negative regulator of repair and hair follicle regeneration in response to injury, due to inhibition of hair follicle stem cell proliferation, potentially via its interaction with XIAP. Plays an important role in male fertility and sperm motility. During spermiogenesis, essential for the establishment of the annulus (a fibrous ring structure connecting the midpiece and the principal piece of the sperm flagellum) which is a requisite for the structural and mechanical integrity of the sperm. Involved in the migration of cortical neurons and the formation of neuron leading processes during embryonic development. Required for dopaminergic metabolism in presynaptic autoreceptors; potentially via activity as a presynaptic scaffold protein. This Rattus norvegicus (Rat) protein is Septin-4.